Reading from the N-terminus, the 72-residue chain is Small ribosomal subunit protein bS20 (72 aa).

Belongs to the bacterial ribosomal protein bS20 family.

In terms of biological role, binds directly to 16S ribosomal RNA. The protein is Small ribosomal subunit protein bS20 (rpsT) of Klebsiella pneumoniae.